The primary structure comprises 236 residues: 2,3,4,5-tetrahydropyridine-2,6-dicarboxylate N-acetyltransferase (236 aa).

It belongs to the transferase hexapeptide repeat family. DapH subfamily.

The enzyme catalyses (S)-2,3,4,5-tetrahydrodipicolinate + acetyl-CoA + H2O = L-2-acetamido-6-oxoheptanedioate + CoA. It participates in amino-acid biosynthesis; L-lysine biosynthesis via DAP pathway; LL-2,6-diaminopimelate from (S)-tetrahydrodipicolinate (acetylase route): step 1/3. Functionally, catalyzes the transfer of an acetyl group from acetyl-CoA to tetrahydrodipicolinate. The chain is 2,3,4,5-tetrahydropyridine-2,6-dicarboxylate N-acetyltransferase from Limosilactobacillus reuteri (strain DSM 20016) (Lactobacillus reuteri).